The chain runs to 339 residues: 7,8-didemethyl-8-hydroxy-5-deazariboflavin synthase (339 aa).

In terms of domain architecture, Radical SAM core spans 13-258 (ITYSKNIFIP…RDTDVSIQVP (246 aa)). [4Fe-4S] cluster contacts are provided by cysteine 27, cysteine 31, and cysteine 34.

The protein belongs to the radical SAM superfamily. CofG family. Consists of two subunits, CofG and CofH. It depends on [4Fe-4S] cluster as a cofactor.

The enzyme catalyses 5-amino-5-(4-hydroxybenzyl)-6-(D-ribitylimino)-5,6-dihydrouracil + S-adenosyl-L-methionine = 7,8-didemethyl-8-hydroxy-5-deazariboflavin + 5'-deoxyadenosine + L-methionine + NH4(+) + H(+). It participates in cofactor biosynthesis; coenzyme F0 biosynthesis. Functionally, catalyzes the radical-mediated synthesis of 7,8-didemethyl-8-hydroxy-5-deazariboflavin from 5-amino-5-(4-hydroxybenzyl)-6-(D-ribitylimino)-5,6-dihydrouracil. This is 7,8-didemethyl-8-hydroxy-5-deazariboflavin synthase from Methanobrevibacter smithii (strain ATCC 35061 / DSM 861 / OCM 144 / PS).